The sequence spans 274 residues: Large ribosomal subunit protein uL2cz/uL2cy (274 aa).

2 disordered regions span residues 1-22 (MAIH…DSQV) and 225-274 (PVDH…RRSK).

This sequence belongs to the universal ribosomal protein uL2 family. In terms of assembly, part of the 50S ribosomal subunit.

It is found in the plastid. It localises to the chloroplast. This Nasturtium officinale (Watercress) protein is Large ribosomal subunit protein uL2cz/uL2cy (rpl2-A).